The following is a 160-amino-acid chain: Peptide methionine sulfoxide reductase MsrA (160 aa).

Cysteine 11 is an active-site residue.

Belongs to the MsrA Met sulfoxide reductase family.

The enzyme catalyses L-methionyl-[protein] + [thioredoxin]-disulfide + H2O = L-methionyl-(S)-S-oxide-[protein] + [thioredoxin]-dithiol. It carries out the reaction [thioredoxin]-disulfide + L-methionine + H2O = L-methionine (S)-S-oxide + [thioredoxin]-dithiol. In terms of biological role, has an important function as a repair enzyme for proteins that have been inactivated by oxidation. Catalyzes the reversible oxidation-reduction of methionine sulfoxide in proteins to methionine. The chain is Peptide methionine sulfoxide reductase MsrA from Malacoplasma penetrans (strain HF-2) (Mycoplasma penetrans).